A 215-amino-acid chain; its full sequence is Transmembrane protein 267 (215 aa).

3 consecutive transmembrane segments (helical) span residues 77–97 (FCEVALAGFFASIIDLDHFFL), 114–134 (PLHCSTLIPVVALALKFLMQL), and 178–198 (YWLYVVITASLPSVCSLIMCL).

The protein localises to the membrane. The protein is Transmembrane protein 267 (tmem267) of Xenopus laevis (African clawed frog).